The following is a 433-amino-acid chain: ATP-dependent protease ATPase subunit HslU (433 aa).

ATP contacts are provided by residues Val-18, 60-65, Asp-246, Glu-311, and Arg-383; that span reads GVGKTE.

This sequence belongs to the ClpX chaperone family. HslU subfamily. In terms of assembly, a double ring-shaped homohexamer of HslV is capped on each side by a ring-shaped HslU homohexamer. The assembly of the HslU/HslV complex is dependent on binding of ATP.

It is found in the cytoplasm. ATPase subunit of a proteasome-like degradation complex; this subunit has chaperone activity. The binding of ATP and its subsequent hydrolysis by HslU are essential for unfolding of protein substrates subsequently hydrolyzed by HslV. HslU recognizes the N-terminal part of its protein substrates and unfolds these before they are guided to HslV for hydrolysis. This chain is ATP-dependent protease ATPase subunit HslU, found in Rhodopseudomonas palustris (strain BisA53).